The primary structure comprises 560 residues: Arginine--tRNA ligase (560 aa).

The 'HIGH' region motif lies at 122–132; sequence ANPNGPLHIGH.

Belongs to the class-I aminoacyl-tRNA synthetase family.

Its subcellular location is the cytoplasm. The catalysed reaction is tRNA(Arg) + L-arginine + ATP = L-arginyl-tRNA(Arg) + AMP + diphosphate. This chain is Arginine--tRNA ligase (argS), found in Methanothermobacter thermautotrophicus (strain ATCC 29096 / DSM 1053 / JCM 10044 / NBRC 100330 / Delta H) (Methanobacterium thermoautotrophicum).